The primary structure comprises 254 residues: Acetyl-coenzyme A carboxylase carboxyl transferase subunit beta (254 aa).

The CoA carboxyltransferase N-terminal domain occupies 1-254; sequence MWLRCPHCHQ…LLKTGSVANE (254 aa). 4 residues coordinate Zn(2+): cysteine 5, cysteine 8, cysteine 23, and cysteine 26. The C4-type zinc-finger motif lies at 5–26; that stretch reads CPHCHQLLFAKQLTQYAVCPNC.

Belongs to the AccD/PCCB family. In terms of assembly, acetyl-CoA carboxylase is a heterohexamer composed of biotin carboxyl carrier protein (AccB), biotin carboxylase (AccC) and two subunits each of ACCase subunit alpha (AccA) and ACCase subunit beta (AccD). Requires Zn(2+) as cofactor.

Its subcellular location is the cytoplasm. It carries out the reaction N(6)-carboxybiotinyl-L-lysyl-[protein] + acetyl-CoA = N(6)-biotinyl-L-lysyl-[protein] + malonyl-CoA. Its pathway is lipid metabolism; malonyl-CoA biosynthesis; malonyl-CoA from acetyl-CoA: step 1/1. In terms of biological role, component of the acetyl coenzyme A carboxylase (ACC) complex. Biotin carboxylase (BC) catalyzes the carboxylation of biotin on its carrier protein (BCCP) and then the CO(2) group is transferred by the transcarboxylase to acetyl-CoA to form malonyl-CoA. This is Acetyl-coenzyme A carboxylase carboxyl transferase subunit beta from Limosilactobacillus reuteri (strain DSM 20016) (Lactobacillus reuteri).